We begin with the raw amino-acid sequence, 126 residues long: Larval cuticle protein 2 (126 aa).

The N-terminal stretch at 1 to 16 is a signal peptide; that stretch reads MFKFVMILAVVGVATA. One can recognise a Chitin-binding type R&amp;R domain in the interval 39 to 100; that stretch reads ADGFDSSLHT…PSGAWIPTPP (62 aa).

Functionally, component of the larval cuticle. This is Larval cuticle protein 2 (Lcp2) from Drosophila melanogaster (Fruit fly).